We begin with the raw amino-acid sequence, 358 residues long: Isopentenyl-diphosphate delta-isomerase (358 aa).

Residue 12–13 (RK) participates in substrate binding. Residues 69–71 (AMT), Ser-99, and Asn-128 contribute to the FMN site. Gln-158 serves as a coordination point for substrate. Glu-159 contacts Mg(2+). FMN is bound by residues Lys-190, Thr-220, 267–269 (GIR), and 288–289 (AG).

The protein belongs to the IPP isomerase type 2 family. In terms of assembly, homooctamer. Dimer of tetramers. It depends on FMN as a cofactor. NADPH is required as a cofactor. The cofactor is Mg(2+).

Its subcellular location is the cytoplasm. The enzyme catalyses isopentenyl diphosphate = dimethylallyl diphosphate. Functionally, involved in the biosynthesis of isoprenoids. Catalyzes the 1,3-allylic rearrangement of the homoallylic substrate isopentenyl (IPP) to its allylic isomer, dimethylallyl diphosphate (DMAPP). In Listeria monocytogenes serotype 4b (strain F2365), this protein is Isopentenyl-diphosphate delta-isomerase.